A 218-amino-acid chain; its full sequence is Octanoyltransferase (218 aa).

A BPL/LPL catalytic domain is found at 32–218 (GEAAEAIWLL…LRTFPQHFPD (187 aa)). Residues 71–78 (RGGQYTYH), 151–153 (AIG), and 164–166 (GLS) contribute to the substrate site. The active-site Acyl-thioester intermediate is the Cys182.

It belongs to the LipB family.

It localises to the cytoplasm. The catalysed reaction is octanoyl-[ACP] + L-lysyl-[protein] = N(6)-octanoyl-L-lysyl-[protein] + holo-[ACP] + H(+). It functions in the pathway protein modification; protein lipoylation via endogenous pathway; protein N(6)-(lipoyl)lysine from octanoyl-[acyl-carrier-protein]: step 1/2. In terms of biological role, catalyzes the transfer of endogenously produced octanoic acid from octanoyl-acyl-carrier-protein onto the lipoyl domains of lipoate-dependent enzymes. Lipoyl-ACP can also act as a substrate although octanoyl-ACP is likely to be the physiological substrate. The sequence is that of Octanoyltransferase from Cereibacter sphaeroides (strain ATCC 17023 / DSM 158 / JCM 6121 / CCUG 31486 / LMG 2827 / NBRC 12203 / NCIMB 8253 / ATH 2.4.1.) (Rhodobacter sphaeroides).